The chain runs to 465 residues: Ribulose bisphosphate carboxylase large chain (465 aa).

Residue Lys4 is modified to N6,N6,N6-trimethyllysine. Thr163 contacts substrate. Residue Lys165 is the Proton acceptor of the active site. Lys167 contributes to the substrate binding site. Mg(2+)-binding residues include Lys191, Asp193, and Glu194. The residue at position 191 (Lys191) is an N6-carboxylysine. His284 (proton acceptor) is an active-site residue. Residues Arg285, His317, and Ser369 each contribute to the substrate site.

This sequence belongs to the RuBisCO large chain family. Type I subfamily. Heterohexadecamer of 8 large chains and 8 small chains; disulfide-linked. The disulfide link is formed within the large subunit homodimers. Mg(2+) is required as a cofactor. Post-translationally, the disulfide bond which can form in the large chain dimeric partners within the hexadecamer appears to be associated with oxidative stress and protein turnover.

It localises to the plastid. The protein resides in the chloroplast. It carries out the reaction 2 (2R)-3-phosphoglycerate + 2 H(+) = D-ribulose 1,5-bisphosphate + CO2 + H2O. It catalyses the reaction D-ribulose 1,5-bisphosphate + O2 = 2-phosphoglycolate + (2R)-3-phosphoglycerate + 2 H(+). Functionally, ruBisCO catalyzes two reactions: the carboxylation of D-ribulose 1,5-bisphosphate, the primary event in carbon dioxide fixation, as well as the oxidative fragmentation of the pentose substrate in the photorespiration process. Both reactions occur simultaneously and in competition at the same active site. This chain is Ribulose bisphosphate carboxylase large chain, found in Trochodendron aralioides (Wheel tree).